Here is a 262-residue protein sequence, read N- to C-terminus: Acyl-coenzyme A diphosphatase FITM2 (262 aa).

Over 1–23 (MEHLERCAWVLRGTLVRSAVRKY) the chain is Cytoplasmic. The chain crosses the membrane as a helical span at residues 24–44 (LPWALAASMLAGSLLKELSPL). Over 45-57 (PESYLSNKRNVLN) the chain is Lumenal. The chain crosses the membrane as a helical span at residues 58–78 (VYFVKVAWAWTFCLLLPFIAL). The Cytoplasmic segment spans residues 79–93 (TNYHLTGKAGLVLRR). Residues 94-114 (LSTLLVGTAIWYVCTAIFSNI) form a helical membrane-spanning segment. Over 115-145 (EHYTGSCYQSPALEGERKEHQSKQQCHGEGG) the chain is Lumenal. Residues 146–166 (FWHGFDISGHSFLLTFCALMI) traverse the membrane as a helical segment. Residue H155 is part of the active site. Residues 167–190 (VEEMAVLHEVKTDRNHCLHAAITT) are Cytoplasmic-facing. Residues 191-211 (LVVALGFLTFIWVWMFLCTAV) traverse the membrane as a helical segment. Residues 212-218 (YFHNLSQ) are Lumenal-facing. H214 is an active-site residue. A helical membrane pass occupies residues 219-239 (KVFGTLFGLLGWYGTYGCWYL). Topologically, residues 240–262 (KSFSPGLPPQSSSLNLKQDTYKK) are cytoplasmic.

Belongs to the FIT family. FIT2 subfamily.

It is found in the endoplasmic reticulum membrane. The enzyme catalyses an acyl-CoA + H2O = an acyl-4'-phosphopantetheine + adenosine 3',5'-bisphosphate + 2 H(+). The catalysed reaction is (9Z)-octadecenoyl-CoA + H2O = S-(9Z-octadecenoyl)-4'-phosphopantetheine + adenosine 3',5'-bisphosphate + 2 H(+). It carries out the reaction (5Z,8Z,11Z,14Z)-eicosatetraenoyl-CoA + H2O = S-(5Z,8Z,11Z,14Z-eicosatetraenoyl)-4'-phosphopantetheine + adenosine 3',5'-bisphosphate + 2 H(+). It catalyses the reaction hexadecanoyl-CoA + H2O = S-hexadecanoyl-4'-phosphopantetheine + adenosine 3',5'-bisphosphate + 2 H(+). Functionally, fatty acyl-coenzyme A (CoA) diphosphatase that hydrolyzes fatty acyl-CoA to yield acyl-4'-phosphopantetheine and adenosine 3',5'-bisphosphate. Preferentially hydrolyzes unsaturated long-chain acyl-CoA substrates such as oleoyl-CoA/(9Z)-octadecenoyl-CoA and arachidonoyl-CoA/(5Z,8Z,11Z,14Z)-eicosatetraenoyl-CoA in the endoplasmic reticulum (ER) lumen. This catalytic activity is required for maintaining ER structure and for lipid droplets (LDs) biogenesis, which are lipid storage organelles involved in maintaining lipid and energy homeostasis. Directly binds to diacylglycerol (DAGs) and triacylglycerol, which is also important for LD biogenesis. May support directional budding of nacent LDs from the ER into the cytosol by reducing DAG levels at sites of LD formation. Plays a role in the regulation of cell morphology and cytoskeletal organization. In Bos taurus (Bovine), this protein is Acyl-coenzyme A diphosphatase FITM2.